The chain runs to 263 residues: Acetylglutamate kinase (263 aa).

Residues 48 to 49, Arg70, and Asn162 contribute to the substrate site; that span reads GG.

This sequence belongs to the acetylglutamate kinase family. ArgB subfamily.

Its subcellular location is the cytoplasm. The catalysed reaction is N-acetyl-L-glutamate + ATP = N-acetyl-L-glutamyl 5-phosphate + ADP. It participates in amino-acid biosynthesis; L-arginine biosynthesis; N(2)-acetyl-L-ornithine from L-glutamate: step 2/4. Its function is as follows. Catalyzes the ATP-dependent phosphorylation of N-acetyl-L-glutamate. This Shewanella sediminis (strain HAW-EB3) protein is Acetylglutamate kinase.